Here is a 409-residue protein sequence, read N- to C-terminus: Elongation factor Tu, plastid (409 aa).

The tr-type G domain occupies 10-214 (KPHINIGTIG…KIDSYIPTPI (205 aa)). A G1 region spans residues 19–26 (GHVDHGKT). 19 to 26 (GHVDHGKT) contacts GTP. Thr26 is a binding site for Mg(2+). The tract at residues 60-64 (GITIN) is G2. The tract at residues 81 to 84 (DCPG) is G3. GTP contacts are provided by residues 81 to 85 (DCPGH) and 136 to 139 (NKED). The interval 136-139 (NKED) is G4. The interval 174-176 (SAL) is G5.

The protein belongs to the TRAFAC class translation factor GTPase superfamily. Classic translation factor GTPase family. EF-Tu/EF-1A subfamily.

Its subcellular location is the plastid. It catalyses the reaction GTP + H2O = GDP + phosphate + H(+). Its function is as follows. GTP hydrolase that promotes the GTP-dependent binding of aminoacyl-tRNA to the A-site of ribosomes during protein biosynthesis. The chain is Elongation factor Tu, plastid (tufA) from Euglena longa (Euglenophycean alga).